A 642-amino-acid polypeptide reads, in one-letter code: Threonine--tRNA ligase (642 aa).

The 61-residue stretch at 1–61 (MPVITLPDGS…ETDAELSIIT (61 aa)) folds into the TGS domain. The segment at 243–534 (DHRKIGKQLD…LIEEYAGRFP (292 aa)) is catalytic. Residues cysteine 334, histidine 385, and histidine 511 each contribute to the Zn(2+) site.

This sequence belongs to the class-II aminoacyl-tRNA synthetase family. Homodimer. Zn(2+) is required as a cofactor.

The protein resides in the cytoplasm. The enzyme catalyses tRNA(Thr) + L-threonine + ATP = L-threonyl-tRNA(Thr) + AMP + diphosphate + H(+). Its function is as follows. Catalyzes the attachment of threonine to tRNA(Thr) in a two-step reaction: L-threonine is first activated by ATP to form Thr-AMP and then transferred to the acceptor end of tRNA(Thr). Also edits incorrectly charged L-seryl-tRNA(Thr). This Shewanella sp. (strain MR-7) protein is Threonine--tRNA ligase.